We begin with the raw amino-acid sequence, 95 residues long: Succinate dehydrogenase membrane anchor subunit (95 aa).

Residues Met1–Leu19 lie on the Mitochondrial matrix side of the membrane. Residues Tyr20 to Ile40 form a helical membrane-spanning segment. A topological domain (mitochondrial intermembrane) is located at residue Glu41. Residues Ile42–Ile62 form a helical membrane-spanning segment. Heme is bound at residue His53. At Glu63–Gln74 the chain is on the mitochondrial matrix side. An a ubiquinone-binding site is contributed by Tyr65. Residues Tyr75 to Leu95 traverse the membrane as a helical segment.

Part of an enzyme complex containing four subunits: a flavoprotein, an iron-sulfur protein, plus two membrane-anchoring proteins. Heme is required as a cofactor.

The protein resides in the mitochondrion inner membrane. The protein operates within carbohydrate metabolism; tricarboxylic acid cycle. Its function is as follows. Membrane-anchoring subunit of succinate dehydrogenase (SDH). This Porphyra purpurea (Red seaweed) protein is Succinate dehydrogenase membrane anchor subunit (SDH4).